The following is a 297-amino-acid chain: tRNA pseudouridine synthase A (297 aa).

Asp72 functions as the Nucleophile in the catalytic mechanism. Tyr144 serves as a coordination point for substrate.

It belongs to the tRNA pseudouridine synthase TruA family. Homodimer.

The enzyme catalyses uridine(38/39/40) in tRNA = pseudouridine(38/39/40) in tRNA. Functionally, formation of pseudouridine at positions 38, 39 and 40 in the anticodon stem and loop of transfer RNAs. The polypeptide is tRNA pseudouridine synthase A (Mycobacterium bovis (strain ATCC BAA-935 / AF2122/97)).